The sequence spans 122 residues: Large ribosomal subunit protein uL18 (122 aa).

This sequence belongs to the universal ribosomal protein uL18 family. Part of the 50S ribosomal subunit; part of the 5S rRNA/L5/L18/L25 subcomplex. Contacts the 5S and 23S rRNAs.

Its function is as follows. This is one of the proteins that bind and probably mediate the attachment of the 5S RNA into the large ribosomal subunit, where it forms part of the central protuberance. The chain is Large ribosomal subunit protein uL18 from Synechococcus sp. (strain JA-3-3Ab) (Cyanobacteria bacterium Yellowstone A-Prime).